The sequence spans 106 residues: Large ribosomal subunit protein uL24 (106 aa).

This sequence belongs to the universal ribosomal protein uL24 family. As to quaternary structure, part of the 50S ribosomal subunit.

In terms of biological role, one of two assembly initiator proteins, it binds directly to the 5'-end of the 23S rRNA, where it nucleates assembly of the 50S subunit. Functionally, one of the proteins that surrounds the polypeptide exit tunnel on the outside of the subunit. The sequence is that of Large ribosomal subunit protein uL24 from Rhodospirillum rubrum (strain ATCC 11170 / ATH 1.1.1 / DSM 467 / LMG 4362 / NCIMB 8255 / S1).